Reading from the N-terminus, the 58-residue chain is uncharacterized protein (58 aa).

This is an uncharacterized protein from Enterobacteria phage T4 (Bacteriophage T4).